Here is a 79-residue protein sequence, read N- to C-terminus: Sec-independent protein translocase protein TatA (79 aa).

The helical transmembrane segment at 1 to 21 threads the bilayer; sequence MGGISIWQLLIILVIVVLLFG. The tract at residues 45–79 is disordered; sequence EEEKDADFEQKKQVEEKSAAEPVSTETQSDVKEKS. A compositionally biased stretch (basic and acidic residues) spans 51 to 63; it reads DFEQKKQVEEKSA.

The protein belongs to the TatA/E family. In terms of assembly, the Tat system comprises two distinct complexes: a TatABC complex, containing multiple copies of TatA, TatB and TatC subunits, and a separate TatA complex, containing only TatA subunits. Substrates initially bind to the TatABC complex, which probably triggers association of the separate TatA complex to form the active translocon.

It is found in the cell inner membrane. Its function is as follows. Part of the twin-arginine translocation (Tat) system that transports large folded proteins containing a characteristic twin-arginine motif in their signal peptide across membranes. TatA could form the protein-conducting channel of the Tat system. The sequence is that of Sec-independent protein translocase protein TatA from Alteromonas mediterranea (strain DSM 17117 / CIP 110805 / LMG 28347 / Deep ecotype).